Reading from the N-terminus, the 408-residue chain is Exo-alpha-sialidase ARB_03431 (408 aa).

An N-terminal signal peptide occupies residues 1–22; the sequence is MGIKQWLLSLVVVAISATATQA. Arg62, Arg81, Asp87, and Gln150 together coordinate substrate. An N-linked (GlcNAc...) asparagine glycan is attached at Asn237. Residues Arg267, Arg324, 324 to 325, 333 to 334, Lys339, Tyr360, Asp378, and 378 to 380 each bind substrate; these read RT, YD, and DWY. Asn398 carries N-linked (GlcNAc...) asparagine glycosylation.

This sequence belongs to the glycosyl hydrolase 33 family.

The protein resides in the secreted. The enzyme catalyses Hydrolysis of alpha-(2-&gt;3)-, alpha-(2-&gt;6)-, alpha-(2-&gt;8)- glycosidic linkages of terminal sialic acid residues in oligosaccharides, glycoproteins, glycolipids, colominic acid and synthetic substrates.. Functionally, sialidase is able to release sialic acid from a wide variety of natural substrates. In Arthroderma benhamiae (strain ATCC MYA-4681 / CBS 112371) (Trichophyton mentagrophytes), this protein is Exo-alpha-sialidase ARB_03431.